The sequence spans 262 residues: Encapsulin nanocompartment protein Rv1762c (262 aa).

It belongs to the UPF0145 family.

It localises to the encapsulin nanocompartment. Cargo protein of a type 1 encapsulin nanocompartment possibly involved in protection against oxidative stress. In Mycobacterium tuberculosis (strain ATCC 25618 / H37Rv), this protein is Encapsulin nanocompartment protein Rv1762c.